The chain runs to 220 residues: UPF0643 protein PB2B2.08 (220 aa).

The protein belongs to the UPF0643 family.

It localises to the cytoplasm. It is found in the nucleus. The sequence is that of UPF0643 protein PB2B2.08 from Schizosaccharomyces pombe (strain 972 / ATCC 24843) (Fission yeast).